The sequence spans 837 residues: E3 ubiquitin-protein ligase bre-1 (837 aa).

Residues 1 to 33 form a disordered region; that stretch reads MMKRSNEGIGGENYASSPSDDGQQKRRKIQFEP. An interaction with ubc-1 region spans residues 1-313; it reads MMKRSNEGIG…AKEIENLRLE (313 aa). 2 coiled-coil regions span residues 54 to 89 and 185 to 253; these read TSKLKQQLLYKNKRIAELEKENERSKRRQQTDESNF and HKEL…KHMR. Positions 269–302 are disordered; it reads GQSGGNGGATPSSSGTTNATEKKISAPDIPPSET. The segment covering 277–287 has biased composition (polar residues); the sequence is ATPSSSGTTNA. Coiled coils occupy residues 300-397, 458-651, and 677-763; these read SETA…AFRS, DEMK…KAQT, and VQFK…NESV. Residues 785–824 form an RING-type zinc finger; sequence CPSCKTRPKDCIMLKCYHLFCETCIKTMYDTRQRKCPKCN.

It belongs to the BRE1 family. Interacts with ubc-1. Interacts with mrg-1. In adult animals, expressed in oocytes, germ cells, pharyngeal and intestinal cells.

Its subcellular location is the nucleus. It carries out the reaction S-ubiquitinyl-[E2 ubiquitin-conjugating enzyme]-L-cysteine + [acceptor protein]-L-lysine = [E2 ubiquitin-conjugating enzyme]-L-cysteine + N(6)-ubiquitinyl-[acceptor protein]-L-lysine.. It participates in protein modification; protein ubiquitination. E3 ubiquitin-protein ligase that mediates monoubiquitination of 'Lys-117' of histone H2B. H2B 'Lys-117' ubiquitination gives a specific tag for epigenetic transcriptional activation and is also prerequisite for histone H3 'Lys-4' and 'Lys-79' methylation. Involved in regulating stem cell proliferative fate. The chain is E3 ubiquitin-protein ligase bre-1 (rfp-1) from Caenorhabditis elegans.